The following is a 299-amino-acid chain: ATP phosphoribosyltransferase (299 aa).

Belongs to the ATP phosphoribosyltransferase family. Long subfamily. Mg(2+) serves as cofactor.

The protein resides in the cytoplasm. The enzyme catalyses 1-(5-phospho-beta-D-ribosyl)-ATP + diphosphate = 5-phospho-alpha-D-ribose 1-diphosphate + ATP. The protein operates within amino-acid biosynthesis; L-histidine biosynthesis; L-histidine from 5-phospho-alpha-D-ribose 1-diphosphate: step 1/9. Its activity is regulated as follows. Feedback inhibited by histidine. In terms of biological role, catalyzes the condensation of ATP and 5-phosphoribose 1-diphosphate to form N'-(5'-phosphoribosyl)-ATP (PR-ATP). Has a crucial role in the pathway because the rate of histidine biosynthesis seems to be controlled primarily by regulation of HisG enzymatic activity. This is ATP phosphoribosyltransferase from Rhodopirellula baltica (strain DSM 10527 / NCIMB 13988 / SH1).